The primary structure comprises 1111 residues: Protein STU1 (1111 aa).

HEAT repeat units follow at residues 95 to 133 and 167 to 205; these read ALPL…ERSV and YVPT…KSDL. Disordered stretches follow at residues 225–245 and 476–751; these read ELNP…VEPS and RLLQ…VDEE. Polar residues predominate over residues 502-511; sequence SKSTMGTSKP. Residues 704 to 714 are compositionally biased toward basic and acidic residues; that stretch reads PREEQRFVKPV.

Belongs to the CLASP family. In terms of assembly, interacts with microtubules.

The protein resides in the cytoplasm. It localises to the cytoskeleton. The protein localises to the nucleus. Its subcellular location is the spindle. Microtubule binding protein that promotes the stabilization of dynamic microtubules. Required for mitotic spindle formation. The sequence is that of Protein STU1 (STU1) from Chaetomium globosum (strain ATCC 6205 / CBS 148.51 / DSM 1962 / NBRC 6347 / NRRL 1970) (Soil fungus).